A 471-amino-acid polypeptide reads, in one-letter code: ATP synthase subunit beta (471 aa).

157–164 lines the ATP pocket; sequence GGAGVGKT.

The protein belongs to the ATPase alpha/beta chains family. In terms of assembly, F-type ATPases have 2 components, CF(1) - the catalytic core - and CF(0) - the membrane proton channel. CF(1) has five subunits: alpha(3), beta(3), gamma(1), delta(1), epsilon(1). CF(0) has three main subunits: a(1), b(2) and c(9-12). The alpha and beta chains form an alternating ring which encloses part of the gamma chain. CF(1) is attached to CF(0) by a central stalk formed by the gamma and epsilon chains, while a peripheral stalk is formed by the delta and b chains.

It localises to the cell inner membrane. It catalyses the reaction ATP + H2O + 4 H(+)(in) = ADP + phosphate + 5 H(+)(out). Its function is as follows. Produces ATP from ADP in the presence of a proton gradient across the membrane. The catalytic sites are hosted primarily by the beta subunits. In Trichlorobacter lovleyi (strain ATCC BAA-1151 / DSM 17278 / SZ) (Geobacter lovleyi), this protein is ATP synthase subunit beta.